A 172-amino-acid polypeptide reads, in one-letter code: Large ribosomal subunit protein uL10 (172 aa).

Belongs to the universal ribosomal protein uL10 family. As to quaternary structure, part of the ribosomal stalk of the 50S ribosomal subunit. The N-terminus interacts with L11 and the large rRNA to form the base of the stalk. The C-terminus forms an elongated spine to which L12 dimers bind in a sequential fashion forming a multimeric L10(L12)X complex.

Its function is as follows. Forms part of the ribosomal stalk, playing a central role in the interaction of the ribosome with GTP-bound translation factors. This chain is Large ribosomal subunit protein uL10, found in Methylobacterium radiotolerans (strain ATCC 27329 / DSM 1819 / JCM 2831 / NBRC 15690 / NCIMB 10815 / 0-1).